A 440-amino-acid chain; its full sequence is D-serine dehydratase (440 aa).

Lys-116 carries the N6-(pyridoxal phosphate)lysine modification.

This sequence belongs to the serine/threonine dehydratase family. DsdA subfamily. As to quaternary structure, monomer. Pyridoxal 5'-phosphate is required as a cofactor.

It carries out the reaction D-serine = pyruvate + NH4(+). This is D-serine dehydratase from Salmonella agona (strain SL483).